Here is a 334-residue protein sequence, read N- to C-terminus: Protein-methionine-sulfoxide reductase catalytic subunit MsrP (334 aa).

A signal peptide (tat-type signal) is located at residues Met-1–Ala-44. Residues Asn-88, Tyr-91 to Glu-92, Cys-146, Thr-181, Asn-233, Arg-238, and Gly-249 to Lys-251 each bind Mo-molybdopterin.

Belongs to the MsrP family. As to quaternary structure, heterodimer of a catalytic subunit (MsrP) and a heme-binding subunit (MsrQ). Requires Mo-molybdopterin as cofactor. In terms of processing, predicted to be exported by the Tat system. The position of the signal peptide cleavage has not been experimentally proven.

The protein resides in the periplasm. The enzyme catalyses L-methionyl-[protein] + a quinone + H2O = L-methionyl-(S)-S-oxide-[protein] + a quinol. It carries out the reaction L-methionyl-[protein] + a quinone + H2O = L-methionyl-(R)-S-oxide-[protein] + a quinol. Its function is as follows. Part of the MsrPQ system that repairs oxidized periplasmic proteins containing methionine sulfoxide residues (Met-O), using respiratory chain electrons. Thus protects these proteins from oxidative-stress damage caused by reactive species of oxygen and chlorine generated by the host defense mechanisms. MsrPQ is essential for the maintenance of envelope integrity under bleach stress, rescuing a wide series of structurally unrelated periplasmic proteins from methionine oxidation, including the primary periplasmic chaperone SurA and the lipoprotein Pal. The catalytic subunit MsrP is non-stereospecific, being able to reduce both (R-) and (S-) diastereoisomers of methionine sulfoxide. This Salmonella arizonae (strain ATCC BAA-731 / CDC346-86 / RSK2980) protein is Protein-methionine-sulfoxide reductase catalytic subunit MsrP.